A 176-amino-acid polypeptide reads, in one-letter code: MQSQVRQNFNSDCEAAINRMVNLEMYASYVYLSMSYYFDRDDVALHHVAKFFKEQSHEEREHAEKFLKYQNKRGGRVVLQDIKKPERDEWSNTLEAMQAALQLEKTVNQALLDLHKLASDKVDPQLCDFLESEYLEEQVKAMKELGDYITNLKRLGVPQNGMGEYLFDKHTLGESS.

A Ferritin-like diiron domain is found at 7-156 (QNFNSDCEAA…DYITNLKRLG (150 aa)). Glutamate 24, glutamate 59, histidine 62, glutamate 104, and glutamine 138 together coordinate Fe cation.

This sequence belongs to the ferritin family. As to quaternary structure, oligomer of 24 subunits. There are two types of subunits: L (light) chain and H (heavy) chain. The functional molecule is roughly spherical and contains a central cavity into which the insoluble mineral iron core is deposited.

The protein localises to the cytoplasm. It catalyses the reaction 4 Fe(2+) + O2 + 4 H(+) = 4 Fe(3+) + 2 H2O. Stores iron in a soluble, non-toxic, readily available form. Important for iron homeostasis. Has ferroxidase activity. Iron is taken up in the ferrous form and deposited as ferric hydroxides after oxidation. In Xenopus laevis (African clawed frog), this protein is Ferritin heavy chain B (fth1-b).